The following is a 225-amino-acid chain: Membrane protein (225 aa).

Residues methionine 1–glutamate 20 are Virion surface-facing. A helical membrane pass occupies residues tyrosine 21–alanine 41. The Intravirion portion of the chain corresponds to threonine 42 to lysine 51. Residues methionine 52–tyrosine 72 traverse the membrane as a helical segment. Residues proline 73–glycine 77 lie on the Virion surface side of the membrane. The chain crosses the membrane as a helical span at residues glycine 78–isoleucine 98. At glutamine 99–threonine 225 the chain is on the intravirion side.

This sequence belongs to the gammacoronaviruses M protein family. As to quaternary structure, homomultimer. Interacts with envelope E protein in the budding compartment of the host cell, which is located between endoplasmic reticulum and the Golgi complex. Forms a complex with HE and S proteins. Interacts with nucleocapsid N protein. This interaction probably participates in RNA packaging into the virus.

It is found in the virion membrane. The protein localises to the host Golgi apparatus membrane. Its function is as follows. Component of the viral envelope that plays a central role in virus morphogenesis and assembly via its interactions with other viral proteins. The chain is Membrane protein from Avian infectious bronchitis virus (strain Beaudette) (IBV).